A 161-amino-acid polypeptide reads, in one-letter code: ATP synthase subunit b 1 (161 aa).

A helical transmembrane segment spans residues 1–21 (MFATAEFWILACLVAFFAILG).

This sequence belongs to the ATPase B chain family. As to quaternary structure, F-type ATPases have 2 components, F(1) - the catalytic core - and F(0) - the membrane proton channel. F(1) has five subunits: alpha(3), beta(3), gamma(1), delta(1), epsilon(1). F(0) has three main subunits: a(1), b(2) and c(10-14). The alpha and beta chains form an alternating ring which encloses part of the gamma chain. F(1) is attached to F(0) by a central stalk formed by the gamma and epsilon chains, while a peripheral stalk is formed by the delta and b chains.

It is found in the cell inner membrane. In terms of biological role, f(1)F(0) ATP synthase produces ATP from ADP in the presence of a proton or sodium gradient. F-type ATPases consist of two structural domains, F(1) containing the extramembraneous catalytic core and F(0) containing the membrane proton channel, linked together by a central stalk and a peripheral stalk. During catalysis, ATP synthesis in the catalytic domain of F(1) is coupled via a rotary mechanism of the central stalk subunits to proton translocation. Its function is as follows. Component of the F(0) channel, it forms part of the peripheral stalk, linking F(1) to F(0). This is ATP synthase subunit b 1 from Parvibaculum lavamentivorans (strain DS-1 / DSM 13023 / NCIMB 13966).